We begin with the raw amino-acid sequence, 240 residues long: Uridylate kinase (240 aa).

13–16 (KASG) lines the ATP pocket. Residues 21–26 (GSQGFG) form an involved in allosteric activation by GTP region. Gly-55 contributes to the UMP binding site. Positions 56 and 60 each coordinate ATP. UMP-binding positions include Asp-75 and 136 to 143 (TGNPFFTT). Residues Thr-163, Gln-164, Tyr-169, and Asp-172 each contribute to the ATP site.

It belongs to the UMP kinase family. As to quaternary structure, homohexamer.

It localises to the cytoplasm. It carries out the reaction UMP + ATP = UDP + ADP. It functions in the pathway pyrimidine metabolism; CTP biosynthesis via de novo pathway; UDP from UMP (UMPK route): step 1/1. Its activity is regulated as follows. Allosterically activated by GTP. Inhibited by UTP. Its function is as follows. Catalyzes the reversible phosphorylation of UMP to UDP. The polypeptide is Uridylate kinase (Brucella anthropi (strain ATCC 49188 / DSM 6882 / CCUG 24695 / JCM 21032 / LMG 3331 / NBRC 15819 / NCTC 12168 / Alc 37) (Ochrobactrum anthropi)).